We begin with the raw amino-acid sequence, 507 residues long: WD repeat-containing protein fzy-1 (507 aa).

Disordered stretches follow at residues 1–39 (MNNK…NTNL) and 74–95 (NKEN…SVEG). Polar residues-rich tracts occupy residues 15 to 24 (VRSSAQQNGL) and 74 to 86 (NKEN…SEPN). WD repeat units lie at residues 219–258 (TNEG…TTEY), 313–352 (GHCR…GSTV), 364–406 (EHTG…QKVR), and 411–450 (CETG…KLSH).

Belongs to the WD repeat CDC20/Fizzy family.

It localises to the chromosome. The protein localises to the cytoplasm. In terms of biological role, plays a role in metaphase-anaphase transition during meiosis I. Required for embryonic anterior-posterior axis formation. The protein is WD repeat-containing protein fzy-1 of Caenorhabditis elegans.